A 512-amino-acid chain; its full sequence is Cytochrome P450 monooxygenase FrzL (512 aa).

A helical transmembrane segment spans residues 6–26; that stretch reads TMLAFVPYLAVFVACYGLVYY. Cys-423 provides a ligand contact to heme.

The protein belongs to the cytochrome P450 family. The cofactor is heme.

It localises to the membrane. Cytochrome P450 monooxygenase; part of the gene cluster that mediates the biosynthesis of the alkaloid (-)-FR901483, a potent immunosuppressant that shows efficacy in animal models and a probable inhibitor of purine nucleotide biosynthesis by targeting phosphoribosylpyrophosphate amidotransferase (PPAT). The only unassigned enzyme in the cluster is the second cytochrome P450 monooxygenase FrzL. The biosynthesis of (-)-FR901483 starts with the condensation of two L-tyrosines to yield (S,S)-dityrosyl-piperazine. This process occurs in 3 steps with the non-canonical nonribosomal peptide synthetase FrzA catalyzing the reduction of L-tyrosine into L-tyrosinal, the spontaneous condensation of 2 L-tyrosinal units, and the subsequent reduction by the NmrA-like family domain-containing oxidoreductase FrzB. The cytochrome P450 monooxygenase FrzC then performs coupling between N10 and C1' to morph the piperazine into a 1,4-diazabicyclo[3.2.1]octane spiro-fused to a 2,5-cyclohexadienone. The dienone portion is further reduced to cyclohexanone by the flavin-dependent reductase FrzD. The methyltranserases (MTs) FrzE and FrzF are then involved in the methylation at the C10' amine and the C4 phenolic oxygen, respectively. The order of the two MTs appear to be interchangeable. Cleavage of the C9-N10' bond by the dioxygenase FrzG then leads to formation of a conjugated iminium. In addition to the oxidation of C9, an additional dehydrogenation between C7 and C8 can occur to give a likely shunt product. The next biosynthetic step is the intramolecular aldol condensation catalyzed by the newly identified aldolase FrzH to yield an aza-tricyclic product with the formation of a C9-C3' bond. The short-chain dehydrogenase/reductase FrzI then produces dephospho-(-)-FR901483 that is phosphorylated at C4'-OH into (-)-FR901483 by the phosphotransferase FrzJ. In Cladobotryum sp, this protein is Cytochrome P450 monooxygenase FrzL.